A 200-amino-acid chain; its full sequence is NADH-quinone oxidoreductase subunit C (200 aa).

The protein belongs to the complex I 30 kDa subunit family. As to quaternary structure, NDH-1 is composed of 14 different subunits. Subunits NuoB, C, D, E, F, and G constitute the peripheral sector of the complex.

It localises to the cell inner membrane. The enzyme catalyses a quinone + NADH + 5 H(+)(in) = a quinol + NAD(+) + 4 H(+)(out). In terms of biological role, NDH-1 shuttles electrons from NADH, via FMN and iron-sulfur (Fe-S) centers, to quinones in the respiratory chain. The immediate electron acceptor for the enzyme in this species is believed to be ubiquinone. Couples the redox reaction to proton translocation (for every two electrons transferred, four hydrogen ions are translocated across the cytoplasmic membrane), and thus conserves the redox energy in a proton gradient. The chain is NADH-quinone oxidoreductase subunit C from Thiobacillus denitrificans (strain ATCC 25259 / T1).